The sequence spans 133 residues: Large ribosomal subunit protein uL15 (133 aa).

Residues 1–57 (MALEKLTPAAGSTHATKRIGRGQGSGNGKTAGKGNKGQRARKGYNEKRGFEGGQQPL) form a disordered region. The segment covering 21-35 (RGQGSGNGKTAGKGN) has biased composition (gly residues).

The protein belongs to the universal ribosomal protein uL15 family. Part of the 50S ribosomal subunit.

Its function is as follows. Binds to the 23S rRNA. The polypeptide is Large ribosomal subunit protein uL15 (Campylobacter concisus (strain 13826)).